The chain runs to 172 residues: Adenine phosphoribosyltransferase (172 aa).

This sequence belongs to the purine/pyrimidine phosphoribosyltransferase family. As to quaternary structure, homodimer.

Its subcellular location is the cytoplasm. The enzyme catalyses AMP + diphosphate = 5-phospho-alpha-D-ribose 1-diphosphate + adenine. It functions in the pathway purine metabolism; AMP biosynthesis via salvage pathway; AMP from adenine: step 1/1. Catalyzes a salvage reaction resulting in the formation of AMP, that is energically less costly than de novo synthesis. The polypeptide is Adenine phosphoribosyltransferase (Gloeothece citriformis (strain PCC 7424) (Cyanothece sp. (strain PCC 7424))).